Consider the following 490-residue polypeptide: Ribulose bisphosphate carboxylase large chain (490 aa).

2 residues coordinate substrate: N127 and T177. Residue K179 is the Proton acceptor of the active site. K181 serves as a coordination point for substrate. Positions 205, 207, and 208 each coordinate Mg(2+). K205 bears the N6-carboxylysine mark. The active-site Proton acceptor is H297. Substrate contacts are provided by R298, H330, and S382.

This sequence belongs to the RuBisCO large chain family. Type I subfamily. In terms of assembly, heterohexadecamer of 8 large chains and 8 small chains. It depends on Mg(2+) as a cofactor.

The protein localises to the plastid. It localises to the chloroplast. The catalysed reaction is 2 (2R)-3-phosphoglycerate + 2 H(+) = D-ribulose 1,5-bisphosphate + CO2 + H2O. The enzyme catalyses D-ribulose 1,5-bisphosphate + O2 = 2-phosphoglycolate + (2R)-3-phosphoglycerate + 2 H(+). In terms of biological role, ruBisCO catalyzes two reactions: the carboxylation of D-ribulose 1,5-bisphosphate, the primary event in carbon dioxide fixation, as well as the oxidative fragmentation of the pentose substrate in the photorespiration process. Both reactions occur simultaneously and in competition at the same active site. The sequence is that of Ribulose bisphosphate carboxylase large chain from Phaeodactylum tricornutum (strain CCAP 1055/1).